The primary structure comprises 429 residues: Glutamate-1-semialdehyde 2,1-aminomutase (429 aa).

At K267 the chain carries N6-(pyridoxal phosphate)lysine.

It belongs to the class-III pyridoxal-phosphate-dependent aminotransferase family. HemL subfamily. In terms of assembly, homodimer. Pyridoxal 5'-phosphate is required as a cofactor.

The protein resides in the cytoplasm. It catalyses the reaction (S)-4-amino-5-oxopentanoate = 5-aminolevulinate. It participates in porphyrin-containing compound metabolism; protoporphyrin-IX biosynthesis; 5-aminolevulinate from L-glutamyl-tRNA(Glu): step 2/2. The sequence is that of Glutamate-1-semialdehyde 2,1-aminomutase from Herpetosiphon aurantiacus (strain ATCC 23779 / DSM 785 / 114-95).